Consider the following 200-residue polypeptide: Riboflavin kinase (200 aa).

A disordered region spans residues 1-20; it reads MATARPSIVGPDSGPESPFP. Thr42 and Asn44 together coordinate Mg(2+). Glu110 (nucleophile) is an active-site residue.

This sequence belongs to the flavokinase family. Zn(2+) serves as cofactor. Mg(2+) is required as a cofactor.

It catalyses the reaction riboflavin + ATP = FMN + ADP + H(+). It participates in cofactor biosynthesis; FMN biosynthesis; FMN from riboflavin (ATP route): step 1/1. Functionally, catalyzes the phosphorylation of riboflavin (vitamin B2) to form flavin mononucleotide (FMN) coenzyme. In Pyricularia oryzae (strain 70-15 / ATCC MYA-4617 / FGSC 8958) (Rice blast fungus), this protein is Riboflavin kinase (FMN1).